A 324-amino-acid polypeptide reads, in one-letter code: Bis(5'-nucleosyl)-tetraphosphatase, symmetrical (324 aa).

The interval 269-324 (PGREVTAPATAPRAPRRPRERQGRQRARGGRGGGNGNGNGGNAAAPAAAPGDAPQE) is disordered. The segment covering 282-297 (APRRPRERQGRQRARG) has biased composition (basic residues). Positions 298 to 309 (GRGGGNGNGNGG) are enriched in gly residues. Residues 310–324 (NAAAPAAAPGDAPQE) show a composition bias toward low complexity.

Belongs to the Ap4A hydrolase family.

The catalysed reaction is P(1),P(4)-bis(5'-adenosyl) tetraphosphate + H2O = 2 ADP + 2 H(+). Functionally, hydrolyzes diadenosine 5',5'''-P1,P4-tetraphosphate to yield ADP. The protein is Bis(5'-nucleosyl)-tetraphosphatase, symmetrical of Xanthomonas campestris pv. campestris (strain ATCC 33913 / DSM 3586 / NCPPB 528 / LMG 568 / P 25).